A 316-amino-acid polypeptide reads, in one-letter code: N-acetylmuramic acid 6-phosphate etherase (316 aa).

The SIS domain maps to 66–229 (IVAAIGRGGR…STASMIRLGK (164 aa)). Glu-94 (proton donor) is an active-site residue. Residue Glu-125 is part of the active site.

The protein belongs to the GCKR-like family. MurNAc-6-P etherase subfamily. As to quaternary structure, homodimer.

It catalyses the reaction N-acetyl-D-muramate 6-phosphate + H2O = N-acetyl-D-glucosamine 6-phosphate + (R)-lactate. It functions in the pathway amino-sugar metabolism; 1,6-anhydro-N-acetylmuramate degradation. The protein operates within amino-sugar metabolism; N-acetylmuramate degradation. It participates in cell wall biogenesis; peptidoglycan recycling. Functionally, specifically catalyzes the cleavage of the D-lactyl ether substituent of MurNAc 6-phosphate, producing GlcNAc 6-phosphate and D-lactate. Together with AnmK, is also required for the utilization of anhydro-N-acetylmuramic acid (anhMurNAc) either imported from the medium or derived from its own cell wall murein, and thus plays a role in cell wall recycling. The protein is N-acetylmuramic acid 6-phosphate etherase of Jannaschia sp. (strain CCS1).